A 117-amino-acid polypeptide reads, in one-letter code: uncharacterized protein (117 aa).

The protein resides in the cytoplasm. It localises to the nucleus. This is an uncharacterized protein from Schizosaccharomyces pombe (strain 972 / ATCC 24843) (Fission yeast).